Consider the following 148-residue polypeptide: Large ribosomal subunit protein uL15 (148 aa).

The span at 1-30 (MPSRLRKTRKLRGHVSHGHGRIGKHRKHPG) shows a compositional bias: basic residues. Residues 1-39 (MPSRLRKTRKLRGHVSHGHGRIGKHRKHPGGRGNAGGLH) form a disordered region. A (3S)-3-hydroxyhistidine modification is found at histidine 39. N6-acetyllysine occurs at positions 47 and 55. The residue at position 68 (serine 68) is a Phosphoserine. The residue at position 110 (lysine 110) is an N6-acetyllysine.

The protein belongs to the universal ribosomal protein uL15 family. As to quaternary structure, component of the large ribosomal subunit. In terms of processing, hydroxylated on His-39 by MINA.

Its subcellular location is the cytoplasm. Component of the large ribosomal subunit. The ribosome is a large ribonucleoprotein complex responsible for the synthesis of proteins in the cell. The sequence is that of Large ribosomal subunit protein uL15 (RPL27A) from Macaca fascicularis (Crab-eating macaque).